The primary structure comprises 266 residues: uncharacterized protein (266 aa).

Residues 12–28 traverse the membrane as a helical segment; the sequence is ILAAGLAIGCAGGYYAY. The FAD-binding FR-type domain maps to 40 to 140; that stretch reads EIYAPFTVNK…RGPFKTTKLD (101 aa).

Belongs to the flavoprotein pyridine nucleotide cytochrome reductase family. FAD serves as cofactor.

The protein resides in the mitochondrion outer membrane. This is an uncharacterized protein from Schizosaccharomyces pombe (strain 972 / ATCC 24843) (Fission yeast).